Consider the following 428-residue polypeptide: Elongation factor 1-alpha (428 aa).

One can recognise a tr-type G domain in the interval 5 to 217; it reads KPHVNIVFIG…DQIPEPEKPV (213 aa). Residues 14-21 form a G1 region; that stretch reads GHVDHGKS. 14-21 lines the GTP pocket; that stretch reads GHVDHGKS. Residue Ser21 coordinates Mg(2+). A G2 region spans residues 68–72; that stretch reads GITID. The segment at 89–92 is G3; it reads DAPG. GTP is bound by residues 89 to 93 and 144 to 147; these read DAPGH and NKMD. Residues 144–147 are G4; that stretch reads NKMD. Positions 181–183 are G5; the sequence is SAW.

The protein belongs to the TRAFAC class translation factor GTPase superfamily. Classic translation factor GTPase family. EF-Tu/EF-1A subfamily.

Its subcellular location is the cytoplasm. The enzyme catalyses GTP + H2O = GDP + phosphate + H(+). GTP hydrolase that promotes the GTP-dependent binding of aminoacyl-tRNA to the A-site of ribosomes during protein biosynthesis. The polypeptide is Elongation factor 1-alpha (Pyrococcus abyssi (strain GE5 / Orsay)).